The primary structure comprises 385 residues: MGNWLLPEGLADVLPAEARRIEELRRELLDLYRTYGFELVAPPLVEYIDSLLSSTGSDLNLRTCKLVDQLSGRTLGVRADMTSQVTRIDAHLLNRAGVTRLCYCGSVLHARPADLLSSRELLQIGAEIYGHAGFEADLEIIQLVMDTLATAGVRNARLDLCHSGVMRAIFDADPQASRHAGDLCTLLREKDVPGLAELASRVDGLGEDTVRALQALATLYGGPEIIARARRELPAVPGMAQALDALQALVDAMPGVTLSVDLADVGGYGYHSGVTFAVYGEDWHDALVRGGRYDDVSCAFGRARPATGFSLDLRKLAAGLTPAEPARAVRAPWGQDPALTDAVRRLRRSGEIVVQVLPGHEQGLDEFVCDRELALQDGAWTVRTL.

It belongs to the class-II aminoacyl-tRNA synthetase family. HisZ subfamily. In terms of assembly, heteromultimer composed of HisG and HisZ subunits.

Its subcellular location is the cytoplasm. It functions in the pathway amino-acid biosynthesis; L-histidine biosynthesis; L-histidine from 5-phospho-alpha-D-ribose 1-diphosphate: step 1/9. Functionally, required for the first step of histidine biosynthesis. May allow the feedback regulation of ATP phosphoribosyltransferase activity by histidine. The sequence is that of ATP phosphoribosyltransferase regulatory subunit from Bordetella pertussis (strain Tohama I / ATCC BAA-589 / NCTC 13251).